The sequence spans 444 residues: Cadaverine/lysine antiporter (444 aa).

Transmembrane regions (helical) follow at residues 7-27, 35-55, 95-115, 123-143, 149-169, 193-213, 222-242, 273-293, 323-343, 354-374, 384-404, and 405-425; these read IGLF…GIAL, IGGI…SLAY, IGNL…FPVL, IACI…GTWV, IGLV…WHWF, ILLC…TGMV, LATM…TQVL, LVSA…MMLV, LLLA…MNSA, LTGI…VDLI, FVSL…LMGA, and SSFE…FYAR.

This sequence belongs to the amino acid-polyamine-organocation (APC) superfamily. Basic amino acid/polyamine antiporter (APA) (TC 2.A.3.2) family.

The protein resides in the cell inner membrane. The enzyme catalyses cadaverine(in) + L-lysine(out) = cadaverine(out) + L-lysine(in). Its function is as follows. Under acidic conditions, in the presence of lysine, functions as a cadaverine:lysine antiporter that facilitates the excretion of cadaverine and the uptake of lysine. This Escherichia coli O157:H7 protein is Cadaverine/lysine antiporter (cadB).